An 81-amino-acid polypeptide reads, in one-letter code: Acyl carrier protein (81 aa).

The 79-residue stretch at 2–80 (ASNEEILAGL…DAVSFIANAQ (79 aa)) folds into the Carrier domain. The residue at position 40 (S40) is an O-(pantetheine 4'-phosphoryl)serine.

The protein belongs to the acyl carrier protein (ACP) family. Post-translationally, 4'-phosphopantetheine is transferred from CoA to a specific serine of apo-ACP by AcpS. This modification is essential for activity because fatty acids are bound in thioester linkage to the sulfhydryl of the prosthetic group.

The protein localises to the cytoplasm. It participates in lipid metabolism; fatty acid biosynthesis. Its function is as follows. Carrier of the growing fatty acid chain in fatty acid biosynthesis. This chain is Acyl carrier protein, found in Paenarthrobacter aurescens (strain TC1).